The sequence spans 210 residues: Ribosomal RNA small subunit methyltransferase G (210 aa).

S-adenosyl-L-methionine-binding positions include Gly76, Met81, 127-128 (VE), and Arg145.

Belongs to the methyltransferase superfamily. RNA methyltransferase RsmG family.

It is found in the cytoplasm. It catalyses the reaction guanosine(527) in 16S rRNA + S-adenosyl-L-methionine = N(7)-methylguanosine(527) in 16S rRNA + S-adenosyl-L-homocysteine. Specifically methylates the N7 position of guanine in position 527 of 16S rRNA. The chain is Ribosomal RNA small subunit methyltransferase G from Acinetobacter baumannii (strain SDF).